The chain runs to 362 residues: Divinyl chlorophyll a/b light-harvesting protein PcbF (362 aa).

6 helical membrane-spanning segments follow: residues 27 to 47 (FIGSHVAHTGLICFAAGANTL), 89 to 109 (IAFIGVFHLICSMVYAGAGLL), 150 to 170 (FILGHHLIFFGVACIWFVEWA), 211 to 231 (VMGGHAFLAFVEITGGAFHIA), 251 to 271 (AVLSWSLAGIGWMAIIAAFWC), and 316 to 336 (LANVHYYLGFFFIQGHLWHAI).

The protein belongs to the PsbB/PsbC family. IsiA/Pcb subfamily. As to quaternary structure, the antenna complex consists of divinyl chlorophylls (a and b) and divinyl chlorophyll a/b binding proteins and binds more divinyl chlorophyll b than does the antenna complex from high-light-adapted Prochlorococcus. The cofactor is divinyl chlorophyll a. It depends on divinyl chlorophyll b as a cofactor.

It localises to the cellular thylakoid membrane. In terms of biological role, the antenna complex functions as a light receptor, it captures and delivers excitation energy to photosystems II and I. The Prochlorales pcb genes are not related to higher plant LHCs. In Prochlorococcus marinus (strain NATL2A), this protein is Divinyl chlorophyll a/b light-harvesting protein PcbF (pcbF).